Consider the following 134-residue polypeptide: Profilin-3 (134 aa).

Cys-13 and Cys-118 are oxidised to a cystine. Positions 84-100 (AVIRGKKGSGGITIKKT) match the Involved in PIP2 interaction motif. The residue at position 114 (Thr-114) is a Phosphothreonine.

It belongs to the profilin family. Occurs in many kinds of cells as a complex with monomeric actin in a 1:1 ratio. Post-translationally, phosphorylated by MAP kinases.

It localises to the cytoplasm. Its subcellular location is the cytoskeleton. Binds to actin and affects the structure of the cytoskeleton. At high concentrations, profilin prevents the polymerization of actin, whereas it enhances it at low concentrations. The polypeptide is Profilin-3 (Olea europaea (Common olive)).